Consider the following 1082-residue polypeptide: Putative white-brown complex homolog protein 30 (1082 aa).

The next 2 membrane-spanning stretches (helical) occupy residues 12–32 and 292–312; these read HIFLFFVFGLSFMSFALSLDG and NIHAYGAILIASLSLLMIMVY. Positions 329 to 348 are enriched in basic and acidic residues; the sequence is SREAAARHAKETTQARERWK. The interval 329-437 is disordered; sequence SREAAARHAK…QAPKGKQLHT (109 aa). The ABC transporter domain occupies 484-726; it reads VAFKDLTLTL…FADIGITVPD (243 aa). ATP is bound at residue 518–525; sequence GPSGAGKT. The 198-residue stretch at 832–1029 folds into the ABC transmembrane type-2 domain; it reads RQYRYFVGRV…TLEAFVLSNA (198 aa). Transmembrane regions (helical) follow at residues 853–873, 877–897, 958–978, 979–999, and 1054–1074; these read ALDFLILLVAGACLGTLAKVN, IDTLGYTYTIIAVSLLCKISA, YIVLVCLVYCVTGMAYIFAIL, YSPSAAQLLSVLVPVVMTLIA, and WILCLIVLVLMGLICRFIAYF.

This sequence belongs to the ABC transporter superfamily. ABCG family. Eye pigment precursor importer (TC 3.A.1.204) subfamily.

The protein localises to the membrane. This is Putative white-brown complex homolog protein 30 (WBC30) from Arabidopsis thaliana (Mouse-ear cress).